The primary structure comprises 252 residues: tRNA pseudouridine synthase A (252 aa).

The Nucleophile role is filled by aspartate 51. Tyrosine 105 lines the substrate pocket.

The protein belongs to the tRNA pseudouridine synthase TruA family.

The catalysed reaction is uridine(38/39/40) in tRNA = pseudouridine(38/39/40) in tRNA. Its function is as follows. Formation of pseudouridine at positions 38, 39 and 40 in the anticodon stem and loop of transfer RNAs. This chain is tRNA pseudouridine synthase A, found in Thermoplasma acidophilum (strain ATCC 25905 / DSM 1728 / JCM 9062 / NBRC 15155 / AMRC-C165).